Reading from the N-terminus, the 448-residue chain is MEFFISMSETIKYNDDDHKTVFLKTLNEQRLEGEFCDIAIVVEDVKFRAHRCVLAACSTYFKKLFKKLEVDSSSVIEIDFLRSDIFEEVLNYMYTAKISVKKEDVNLMMSSGQILGIRFLDKLCSQKRDVSSPEENTQSKSKYCLKINRPIGEPNDTQDDEVEEIGDHDDSPSDVTVEGTPPSQEDGKSPTTTLRVQEAILKELGSEEVRKVNCYGQEVESMETTESKDLGSQTPQALTFNDGISEVKDEQTPGWTTAAGDMKFEYLLYGHREHIVCQACGKTFSDEARLRKHEKLHTADRPFVCEMCTKGFTTQAHLKEHLKIHTGYKPYSCEVCGKSFIRAPDLKKHERVHSNERPFACHMCDKAFKHKSHLKDHERRHRGEKPFVCGSCTKAFAKASDLKRHENNMHSERKQVTTANSIQSETEQLQAAAMAREAEQQLETIACS.

In terms of domain architecture, BTB spans 36–102 (CDIAIVVEDV…MYTAKISVKK (67 aa)). The Nuclear localization signal motif lies at 50-66 (HRCVLAACSTYFKKLFK). Residues 130 to 193 (VSSPEENTQS…QEDGKSPTTT (64 aa)) form a disordered region. Over residues 156 to 167 (DTQDDEVEEIGD) the composition is skewed to acidic residues. 5 consecutive C2H2-type zinc fingers follow at residues 275-302 (IVCQACGKTFSDEARLRKHEKLHTADRP), 303-330 (FVCEMCTKGFTTQAHLKEHLKIHTGYKP), 331-358 (YSCEVCGKSFIRAPDLKKHERVHSNERP), 359-386 (FACHMCDKAFKHKSHLKDHERRHRGEKP), and 387-415 (FVCGSCTKAFAKASDLKRHENNMHSERKQ). Positions 404-415 (RHENNMHSERKQ) are enriched in basic and acidic residues. Residues 404–425 (RHENNMHSERKQVTTANSIQSE) are disordered. Residues 416–425 (VTTANSIQSE) are compositionally biased toward polar residues.

The protein belongs to the krueppel C2H2-type zinc-finger protein family. Interacts with ZBTB21.

Its subcellular location is the nucleus. In terms of biological role, transcriptional activator of the dopamine transporter (DAT), binding it's promoter at the consensus sequence 5'-CCTGCACAGTTCACGGA-3'. Binds to 5'-d(GCC)(n)-3' trinucleotide repeats in promoter regions and acts as a repressor of the FMR1 gene. Transcriptional repressor of MYC and thymidine kinase promoters. The chain is Zinc finger and BTB domain-containing protein 14 (ZBTB14) from Gallus gallus (Chicken).